The chain runs to 480 residues: 3-isopropylmalate dehydratase large subunit (480 aa).

Residues Cys-361, Cys-421, and Cys-424 each coordinate [4Fe-4S] cluster.

This sequence belongs to the aconitase/IPM isomerase family. LeuC type 1 subfamily. In terms of assembly, heterodimer of LeuC and LeuD. Requires [4Fe-4S] cluster as cofactor.

It catalyses the reaction (2R,3S)-3-isopropylmalate = (2S)-2-isopropylmalate. Its pathway is amino-acid biosynthesis; L-leucine biosynthesis; L-leucine from 3-methyl-2-oxobutanoate: step 2/4. Functionally, catalyzes the isomerization between 2-isopropylmalate and 3-isopropylmalate, via the formation of 2-isopropylmaleate. The polypeptide is 3-isopropylmalate dehydratase large subunit (Corynebacterium diphtheriae (strain ATCC 700971 / NCTC 13129 / Biotype gravis)).